The sequence spans 284 residues: Tropomyosin (284 aa).

Positions 1 to 284 (MDAIKKKMQA…DMTFTELIGN (284 aa)) form a coiled coil.

Belongs to the tropomyosin family. In terms of assembly, homodimer.

Tropomyosin, in association with the troponin complex, plays a central role in the calcium dependent regulation of muscle contraction. This chain is Tropomyosin, found in Blattella germanica (German cockroach).